A 1521-amino-acid polypeptide reads, in one-letter code: Retroelement silencing factor 1 (1521 aa).

K223 is covalently cross-linked (Glycyl lysine isopeptide (Lys-Gly) (interchain with G-Cter in SUMO2)). The tract at residues 621–640 (EKQHKPIQGDPDIADSSLGK) is disordered. S910 carries the post-translational modification Phosphoserine. At T996 the chain carries Phosphothreonine. 2 stretches are compositionally biased toward polar residues: residues 1093 to 1105 (KNMP…SQES) and 1124 to 1142 (LSSN…QSVS). 3 disordered regions span residues 1093–1147 (KNMP…EKKK), 1204–1230 (ERAS…KSTR), and 1312–1335 (EASR…PDKM). At S1142 the chain carries Phosphoserine. Positions 1214–1228 (PSPESSDPKGSSSKS) are enriched in low complexity. Over residues 1325 to 1335 (GKFDGKQPDKM) the composition is skewed to basic and acidic residues. K1411 participates in a covalent cross-link: Glycyl lysine isopeptide (Lys-Gly) (interchain with G-Cter in SUMO2). Disordered regions lie at residues 1425–1444 (DKQD…VQVS) and 1457–1485 (IPTR…SADE). Basic and acidic residues predominate over residues 1467–1476 (SQRDSADSRL). Phosphoserine is present on residues S1482 and S1514.

Interacts with SETDB1.

It is found in the nucleus. Functionally, plays a role in the regulation of imprinted gene expression, regulates repressive epigenetic modifications associated with SETDB1. Required for the recruitment or accumulation of SETDB1 to the endogenous retroviruses (ERVs) and maintenance of repressive chromatin configuration, contributing to a subset of the SETDB1-dependent ERV silencing in embryonic stem cells. This is Retroelement silencing factor 1 from Mus musculus (Mouse).